The sequence spans 74 residues: Small heat shock protein hspG10 (74 aa).

One can recognise a sHSP domain in the interval 31–74; that stretch reads KTIIDILPSMDVTMTNDKLIIETELAGISKDHIEIDIKDSILTI.

The protein belongs to the small heat shock protein (HSP20) family.

This is Small heat shock protein hspG10 (hspG10) from Dictyostelium discoideum (Social amoeba).